We begin with the raw amino-acid sequence, 114 residues long: Ferritin-like protein (114 aa).

Fe cation is bound by residues Glu29, Glu59, and His62. The cargo-loading peptide stretch occupies residues 86 to 114 (FTDKPITEIEEETSGGSENTGGDLGIRKL). The segment at 94 to 114 (IEEETSGGSENTGGDLGIRKL) is disordered. Residues 103–114 (ENTGGDLGIRKL) show a composition bias toward gly residues.

The protein belongs to the ferritin-like superfamily. As to quaternary structure, probably forms a decamer which binds to the pentameric axis of the interior of the protein shell; as the Flp cargo protein is flexible, packing into the shell is not rigid. 3, 4 or 5 cargo decamers bind inside the encapulin nanocompartment. The cofactor is Fe cation.

Its subcellular location is the encapsulin nanocompartment. Its function is as follows. Cargo protein of a type 1 encapsulin nanocompartment. A ferritin-like protein that probably stores iron in the encapsulin nanocompartment. This Thermotoga maritima (strain ATCC 43589 / DSM 3109 / JCM 10099 / NBRC 100826 / MSB8) protein is Ferritin-like protein.